The chain runs to 325 residues: Coiled-coil domain-containing protein 130 homolog (325 aa).

Positions 156–262 (LKLENKKLDI…KLKRELIKNE (107 aa)) form a coiled coil.

The protein belongs to the CWC16 family.

The polypeptide is Coiled-coil domain-containing protein 130 homolog (Dictyostelium discoideum (Social amoeba)).